Reading from the N-terminus, the 145-residue chain is Small ribosomal subunit protein uS19 (145 aa).

An N-acetylalanine modification is found at A2. Residue K108 forms a Glycyl lysine isopeptide (Lys-Gly) (interchain with G-Cter in SUMO2) linkage.

It belongs to the universal ribosomal protein uS19 family. In terms of assembly, component of the small ribosomal subunit.

The protein localises to the cytoplasm. Its function is as follows. Component of the small ribosomal subunit. The ribosome is a large ribonucleoprotein complex responsible for the synthesis of proteins in the cell. In Mesocricetus auratus (Golden hamster), this protein is Small ribosomal subunit protein uS19 (RPS15).